The following is a 148-amino-acid chain: Large ribosomal subunit protein bL9 (148 aa).

Positions 46 to 65 are disordered; the sequence is QLQQQNKHAEQEREQEIEDA. Over residues 52–65 the composition is skewed to basic and acidic residues; sequence KHAEQEREQEIEDA.

The protein belongs to the bacterial ribosomal protein bL9 family.

Functionally, binds to the 23S rRNA. The protein is Large ribosomal subunit protein bL9 of Staphylococcus carnosus (strain TM300).